The chain runs to 1063 residues: Structural polyprotein (1063 aa).

Residues 1 to 131 (MASTTPITME…LGPPTNPFQA (131 aa)) form a disordered region. Positions 30-69 (GASQPRRPRPPRQRDSSTSGDDSGRDSGGPRRRRGNRGRG) are human C1QBP/SF2P32-binding. At Ser46 the chain carries Phosphoserine; by host. Basic residues predominate over residues 59 to 69 (PRRRRGNRGRG). Over residues 70–87 (QRKDWSRAPPPPEERQEG) the composition is skewed to basic and acidic residues. Residues 93–107 (APKPSRAPPQQPQPP) are compositionally biased toward pro residues. Cysteines 153 and 197 form a disulfide. Residues 279 to 300 (GAPQAFLAGLLLAAVAVGTARA) are functions as E2 signal peptide. At 301–534 (GLQPRVDMAA…LWLATANALS (234 aa)) the chain is on the extracellular side. N-linked (GlcNAc...) asparagine; by host glycosylation is found at Asn353, Asn371, and Asn429. A helical membrane pass occupies residues 535 to 555 (LDHALAAFVLLVPWVLIFMVC). Over 556 to 582 (RRACRRRGAAAALTAVVLQGYNPPAYG) the chain is Cytoplasmic. A functions as E1 signal peptide region spans residues 563-582 (GAAAALTAVVLQGYNPPAYG). The Extracellular segment spans residues 583–1028 (EEAFTYLCTA…QTWAEWAAAH (446 aa)). Cystine bridges form between Cys590/Cys595, Cys619/Cys824, Cys641/Cys653, Cys699/Cys712, Cys758/Cys767, Cys807/Cys817, Cys931/Cys934, and Cys950/Cys983. Residue Asn658 is glycosylated (N-linked (GlcNAc...) asparagine; by host). Residues Asn670 and Ala671 each coordinate Ca(2+). Residues Asp718 and Thr719 each contribute to the Ca(2+) site. Residue Asn791 is glycosylated (N-linked (GlcNAc...) asparagine; by host). 2 O-linked (GalNAc...) threonine; by host glycosylation sites follow: Thr1011 and Thr1012. The helical transmembrane segment at 1029–1049 (WWQLTLGAICALPLAGLLACC) threads the bilayer. The Extracellular segment spans residues 1050 to 1063 (AKCLYYLRGAIAPR).

As to quaternary structure, homodimer; further assembles into homooligomer. Interacts with human C1QBP. Interacts (via N-terminus) with protease/methyltransferase p150. In terms of assembly, heterodimer with spike glycoprotein E2. Heterodimer with spike glycoprotein E1. Post-translationally, structural polyprotein: Specific enzymatic cleavages in vivo yield mature proteins. Two signal peptidase-mediated cleavages within the polyprotein produce the structural proteins capsid, E2, and E1. The E2 signal peptide remains attached to the C-terminus of the capsid protein after cleavage by the signal peptidase. Another signal peptide at E2 C-terminus directs E1 to the ER, with a similar mechanism. Contains three N-linked oligosaccharides. In terms of processing, capsid is phosphorylated on Ser-46 by host. This phosphorylation negatively regulates capsid protein RNA-binding activity. Dephosphorylated by human PP1A.

The protein localises to the virion. It is found in the host cytoplasm. The protein resides in the host mitochondrion. Its subcellular location is the virion membrane. It localises to the host Golgi apparatus membrane. Its function is as follows. Capsid protein interacts with genomic RNA and assembles into icosahedric core particles 65-70 nm in diameter. The resulting nucleocapsid eventually associates with the cytoplasmic domain of E2 at the cell membrane, leading to budding and formation of mature virions from host Golgi membranes. Phosphorylation negatively regulates RNA-binding activity, possibly delaying virion assembly during the viral replication phase. Capsid protein dimerizes and becomes disulfide-linked in the virion. Modulates genomic RNA replication. Modulates subgenomic RNA synthesis by interacting with human C1QBP/SF2P32. Induces both perinuclear clustering of mitochondria and the formation of electron-dense intermitochondrial plaques, both hallmarks of rubella virus infected cells. Induces apoptosis when expressed in transfected cells. In terms of biological role, responsible for viral attachment to target host cell, by binding to the cell receptor. Its transport to the plasma membrane depends on interaction with E1 protein. The surface glycoproteins display an irregular helical organization and a pseudo-tetrameric inner nucleocapsid arrangement. Class II viral fusion protein. Fusion activity is inactive as long as E1 is bound to E2 in mature virion. After virus attachment to target cell and clathrin-mediated endocytosis, acidification of the endosome would induce dissociation of E1/E2 heterodimer and concomitant trimerization of the E1 subunits. This E1 homotrimer is fusion active, and promotes release of viral nucleocapsid in cytoplasm after endosome and viral membrane fusion. The cytoplasmic tail of spike glycoprotein E1 modulates virus release. The surface glycoproteins display an irregular helical organization and a pseudo-tetrameric inner nucleocapsid arrangement. The polypeptide is Structural polyprotein (Rubella virus (strain Cendehill) (RUBV)).